A 211-amino-acid polypeptide reads, in one-letter code: Uridine kinase (211 aa).

12-19 (GGSGSGKT) contacts ATP.

The protein belongs to the uridine kinase family.

It localises to the cytoplasm. It carries out the reaction uridine + ATP = UMP + ADP + H(+). The enzyme catalyses cytidine + ATP = CMP + ADP + H(+). Its pathway is pyrimidine metabolism; CTP biosynthesis via salvage pathway; CTP from cytidine: step 1/3. It functions in the pathway pyrimidine metabolism; UMP biosynthesis via salvage pathway; UMP from uridine: step 1/1. The chain is Uridine kinase (udk) from Bacillus subtilis (strain 168).